The chain runs to 776 residues: G protein-regulated inducer of neurite outgrowth 3 (776 aa).

Disordered regions lie at residues 1–37 and 68–312; these read MGTV…RHRP and VCEH…IKEV. A compositionally biased stretch (low complexity) spans 101–118; the sequence is QLPGSSQPAASAPSSAAG. Composition is skewed to polar residues over residues 129–161 and 193–203; these read PANQ…SQRT and ETIQGTVQTPV. Positions 208–217 are enriched in low complexity; it reads VVSHSSSPVG. Residues 242–274 show a composition bias toward polar residues; the sequence is SGCSENKQPSVTASGPQGTTSVTPQPTPLTSEP. 2 positions are modified to phosphoserine: S332 and S365. 2 disordered regions span residues 518 to 637 and 723 to 748; these read ISKA…RPSR and LIKT…LRGR. Over residues 520 to 552 the composition is skewed to basic and acidic residues; sequence KADHSGSLDPTNKGDAREKKPASPQVVKEKEST. A compositionally biased stretch (polar residues) spans 566 to 580; the sequence is PKSQESGGTESAANP. The span at 604 to 620 shows a compositional bias: low complexity; that stretch reads SLSLPSDPMGDSSPGSG. Residues 725–742 show a composition bias toward polar residues; that stretch reads KTQNSQTRRSISSDTSSN.

May be involved in neurite outgrowth. This is G protein-regulated inducer of neurite outgrowth 3 (GPRIN3) from Homo sapiens (Human).